The primary structure comprises 201 residues: Transcription factor MYB82 (201 aa).

HTH myb-type domains follow at residues Lys9–Leu61 and Arg62–Pro116. DNA-binding regions (H-T-H motif) lie at residues Trp37–Leu61 and Trp89–Leu112. Positions Leu112–Phe133 are disordered.

In terms of assembly, homodimer and heterodimer with GL1. Part of the WD40-bHLH-MYB complex. Interacts with BHLH012/MYC1 and BHLH042/TT8. Interacts (via N-terminus) with GL1 and GL3. In terms of tissue distribution, mainly expressed in the trichomes of new leaves.

It localises to the nucleus. Transcription activation factor positively regulating trichomes development. Has a function nearly equivalent to that of GL1 and can complement gl1 mutants. The protein is Transcription factor MYB82 (MYB82) of Arabidopsis thaliana (Mouse-ear cress).